Reading from the N-terminus, the 309-residue chain is Pantoate--beta-alanine ligase (309 aa).

It belongs to the pantothenate synthetase family.

The protein localises to the cytoplasm. Its subcellular location is the nucleus. It catalyses the reaction (R)-pantoate + beta-alanine + ATP = (R)-pantothenate + AMP + diphosphate + H(+). It participates in cofactor biosynthesis; (R)-pantothenate biosynthesis; (R)-pantothenate from (R)-pantoate and beta-alanine: step 1/1. Required for pantothenic acid biosynthesis. The chain is Pantoate--beta-alanine ligase (PAN6) from Saccharomyces cerevisiae (strain ATCC 204508 / S288c) (Baker's yeast).